Consider the following 1325-residue polypeptide: Bile salt export pump (1325 aa).

The Cytoplasmic portion of the chain corresponds to 1–62 (MSDAVILRSV…FSSTTDIWLM (62 aa)). In terms of domain architecture, ABC transmembrane type-1 1 spans 62-385 (MFVGSLCAFL…ASSCLEAFAT (324 aa)). Residues 63 to 83 (FVGSLCAFLHGLSHPGVLLIF) traverse the membrane as a helical segment. Over 84 to 147 (GTMTDVFIAY…MIKFASYYAG (64 aa)) the chain is Extracellular. N-linked (GlcNAc...) asparagine glycans are attached at residues Asn109, Asn116, Asn122, and Asn125. The helical transmembrane segment at 148–168 (IALLVLITGYIQICFWVIAAA) threads the bilayer. The Cytoplasmic segment spans residues 169–240 (RQIQKMRKIS…FLLGFYQGWK (72 aa)). Residues 241-261 (LTLVIISVSPLIGIGAAIIGL) form a helical membrane-spanning segment. At 262–319 (SVSKFTDYELKAYAKAGSVADEVISSMRTVAAFGGEKKEVERYEKNLVFAQRWGIRKG) the chain is on the extracellular side. A helical membrane pass occupies residues 320–340 (IVMGFFTGFMWCLIFLCYALA). The Cytoplasmic portion of the chain corresponds to 341–353 (FWYGSKLVLEDGE). Residues 354 to 374 (YTAGTLVQIFLSILLGALNLG) traverse the membrane as a helical segment. Residues Asn375, Asn424, and Asn440 are each glycosylated (N-linked (GlcNAc...) asparagine). The Extracellular segment spans residues 375-759 (NASSCLEAFA…KFNAPEWPYM (385 aa)). The ABC transporter 1 domain occupies 420–656 (IEFHNVTFHY…KGVYFTLVTL (237 aa)). An ATP-binding site is contributed by 455 to 462 (GSSGSGKS). An N-linked (GlcNAc...) asparagine glycan is attached at Asn591. The 289-residue stretch at 759–1047 (MLFGAVGAAV…ASSYTPSYAK (289 aa)) folds into the ABC transmembrane type-1 2 domain. Residues 760-780 (LFGAVGAAVNGSVTPLYAFLF) form a helical membrane-spanning segment. Topologically, residues 781 to 798 (SQILGTFSLPDKEEQRSQ) are cytoplasmic. A helical transmembrane segment spans residues 799–819 (INGVCLLFVAVGCVSLCTQFL). The Extracellular segment spans residues 820 to 894 (QGYAFAKSGE…NSFTNVTVAM (75 aa)). The N-linked (GlcNAc...) asparagine glycan is linked to Asn889. The chain crosses the membrane as a helical span at residues 895–915 (IIAFFFSWKLSLVIMCFFPFL). The Cytoplasmic segment spans residues 916–983 (ALSGALQTRM…PFKTAFRKAN (68 aa)). The chain crosses the membrane as a helical span at residues 984–1004 (VYGFCFGFSQCIVFVANSASY). Residues 1005–1014 (RYGGYLIPNE) are Extracellular-facing. Residues 1015–1035 (GLHFSYVFRVISSVVLSATAL) traverse the membrane as a helical segment. Topologically, residues 1036-1325 (GRASSYTPSY…KLVTTGAPIS (290 aa)) are cytoplasmic. The region spanning 1082-1320 (VDFVDCKFTY…KGAYYKLVTT (239 aa)) is the ABC transporter 2 domain. 1117-1124 (GSSGCGKS) is an ATP binding site.

It belongs to the ABC transporter superfamily. ABCB family. Multidrug resistance exporter (TC 3.A.1.201) subfamily. In terms of assembly, interacts with HAX1. Interacts with the adapter protein complex 2 (AP-2) throught AP2A2 or AP2A1; this interaction regulates cell membrane expression of ABCB11 through its internalization in a clathrin-dependent manner and its subsequent degradation. Post-translationally, N-glycosylated. Ubiquitinated; short-chain ubiquitination regulates cell-Surface expression of ABCB11. In terms of tissue distribution, liver.

The protein localises to the apical cell membrane. Its subcellular location is the recycling endosome membrane. It is found in the endosome. The protein resides in the cell membrane. It catalyses the reaction cholate(in) + ATP + H2O = cholate(out) + ADP + phosphate + H(+). The enzyme catalyses taurocholate(in) + ATP + H2O = taurocholate(out) + ADP + phosphate + H(+). It carries out the reaction glycocholate(in) + ATP + H2O = glycocholate(out) + ADP + phosphate + H(+). The catalysed reaction is glycochenodeoxycholate(in) + ATP + H2O = glycochenodeoxycholate(out) + ADP + phosphate + H(+). It catalyses the reaction taurochenodeoxycholate(in) + ATP + H2O = taurochenodeoxycholate(out) + ADP + phosphate + H(+). The enzyme catalyses glycoursodeoxycholate(in) + ATP + H2O = glycoursodeoxycholate(out) + ADP + phosphate + H(+). It carries out the reaction tauroursodeoxycholate(in) + ATP + H2O = tauroursodeoxycholate(out) + ADP + phosphate + H(+). The catalysed reaction is taurodeoxycholate(in) + ATP + H2O = taurodeoxycholate(out) + ADP + phosphate + H(+). It catalyses the reaction taurolithocholate 3-sulfate(in) + ATP + H2O = taurolithocholate 3-sulfate(out) + ADP + phosphate + H(+). The enzyme catalyses pravastatin(in) + ATP + H2O = pravastatin(out) + ADP + phosphate + H(+). Its activity is regulated as follows. The uptake of taurocholate is inhibited by taurolithocholate sulfate with an IC(50) of 9 uM. Pravastatin competitively inhibits the transport of taurocholic acid. Cyclosporin A, glibenclamide, rifampicin and troglitazonestrongly competitively inhibit the transport activity of taurocholate. The canalicular transport activity of taurocholate is strongly dependent on canalicular membrane cholesterol content. The uptake of taurocholate is increased by short- and medium-chain fatty acids. Cholesterol increases transport capacity of taurocholate without affecting the affinity for the substrate. Its function is as follows. Catalyzes the transport of the major hydrophobic bile salts, such as taurine and glycine-conjugated cholic acid across the canalicular membrane of hepatocytes in an ATP-dependent manner, therefore participates in hepatic bile acid homeostasis and consequently to lipid homeostasis through regulation of biliary lipid secretion in a bile salts dependent manner. Transports taurine-conjugated bile salts more rapidly than glycine-conjugated bile salts. Also transports non-bile acid compounds, such as pravastatin and fexofenadine in an ATP-dependent manner and may be involved in their biliary excretion. In Canis lupus familiaris (Dog), this protein is Bile salt export pump.